Here is a 444-residue protein sequence, read N- to C-terminus: Citrate-proton symporter (444 aa).

Residues 1–41 (MPTARCSMRASSTAPVRMMATAGGARIGAILRVTSGNFLEQ) lie on the Cytoplasmic side of the membrane. The helical transmembrane segment at 42–62 (FDFFLFGFYATYIAHTFFPAS) threads the bilayer. The Periplasmic portion of the chain corresponds to 63–72 (SEFASLMMTF). The helical transmembrane segment at 73–93 (AVFGAGFLMRPIGAIVLGAYI) threads the bilayer. Topologically, residues 94–114 (DKVGRRKGLIVTLSIMATGTF) are cytoplasmic. Residues 115–135 (LIVLIPSYQTIGLWAPLLVLI) traverse the membrane as a helical segment. Over 136–137 (GR) the chain is Periplasmic. The helical transmembrane segment at 138 to 158 (LLQGFSAGAELGGVSVYLAEI) threads the bilayer. The Cytoplasmic portion of the chain corresponds to 159 to 177 (ATPGRKGFYTSWQSGSQQV). The chain crosses the membrane as a helical span at residues 178-198 (AIMVAAAMGFALNAVLEPSAI). Position 199 (Ser199) is a topological domain, periplasmic. The helical transmembrane segment at 200–220 (DWGWRIPFLFGVLIVPFIFIL) threads the bilayer. Over 221–251 (RRKLEETQEFTARRHHLAMRQVFATLLANWQ) the chain is Cytoplasmic. The chain crosses the membrane as a helical span at residues 252–272 (VVIAGMMMVAMTTTAFYLITV). At 273-289 (YAPTFGKKVLMLSASDS) the chain is on the periplasmic side. The chain crosses the membrane as a helical span at residues 290 to 310 (LLVTLLVAISNFFWLPVGGAL). Residues 311–318 (SDRFGRRS) lie on the Cytoplasmic side of the membrane. The chain crosses the membrane as a helical span at residues 319–339 (VLIAMTLLALATAWPALTMLA). Residue Asn340 is a topological domain, periplasmic. The chain crosses the membrane as a helical span at residues 341–361 (APSFLMMLSVLLWLSFIYGMY). The Cytoplasmic portion of the chain corresponds to 362 to 379 (NGAMIPALTEIMPAEVRV). Residues 380–400 (AGFSLAYSLATAVFGGFTPVI) form a helical membrane-spanning segment. The Periplasmic segment spans residues 401 to 411 (STALIEYTGDK). A helical transmembrane segment spans residues 412 to 432 (ASPGYWMSFAAICGLLATCYL). The Cytoplasmic portion of the chain corresponds to 433-444 (YRRSAVALQTAR).

The protein belongs to the major facilitator superfamily. Metabolite:H+ Symporter (MHS) family (TC 2.A.1.6) family.

The protein resides in the cell inner membrane. Its function is as follows. Uptake of citrate across the boundary membrane with the concomitant transport of protons into the cell (symport system). In Klebsiella pneumoniae, this protein is Citrate-proton symporter (citH).